The primary structure comprises 581 residues: Arginine--tRNA ligase (581 aa).

Residues 126-136 (PNLAKEMHVGH) carry the 'HIGH' region motif.

Belongs to the class-I aminoacyl-tRNA synthetase family. As to quaternary structure, monomer.

Its subcellular location is the cytoplasm. The catalysed reaction is tRNA(Arg) + L-arginine + ATP = L-arginyl-tRNA(Arg) + AMP + diphosphate. This chain is Arginine--tRNA ligase, found in Shewanella sp. (strain ANA-3).